Reading from the N-terminus, the 2774-residue chain is Microtubule-associated protein 1A (2774 aa).

Residues Ser114, Ser117, Ser118, Ser121, and Ser155 each carry the phosphoserine modification. Residue Tyr177 is modified to Phosphotyrosine. The tract at residues 310 to 329 (PSKIKHRADSKESLKAAPKT) is disordered. A phosphoserine mark is found at Ser319 and Ser322. Repeat unit 1 spans residues 336–338 (KRE). An 11 X 3 AA repeats of K-K-[DE] region spans residues 336-541 (KREEVLEEGA…TQDFEELKRE (206 aa)). Over residues 342–390 (EEGAKEARSELAKELAKTEKKAKEPSEKPPEKPSKSERVRGESSEALKA) the composition is skewed to basic and acidic residues. 9 disordered regions span residues 342-718 (EEGA…SFLS), 737-808 (TIPG…TELT), 845-939 (EDQS…VGKE), 957-1078 (FGAP…QTGC), 1093-1344 (ETGE…ILPE), 1357-1646 (QKDG…SPEQ), 1693-1725 (ESTFLDEGPDEQEITPLQHTPRSPWTSDFKDFQ), 1739-1843 (LAES…VPFS), and 1861-2644 (AELE…LVNG). Position 384 is a phosphoserine (Ser384). Residues 391-406 (EKRRLIKDKAGKKHLK) show a composition bias toward basic residues. Basic and acidic residues-rich tracts occupy residues 407–464 (EKIS…KPDL) and 484–500 (VKVDKGRAARGEKELSS). 9 consecutive repeat copies span residues 415 to 417 (KKD), 420 to 422 (KKE), 424 to 426 (KKE), 427 to 429 (RKE), 431 to 433 (KKE), 436 to 438 (RKE), 440 to 442 (KKD), 444 to 446 (KKD), and 449 to 451 (RKD). Position 504 is a phosphothreonine (Thr504). The segment covering 506-516 (PAQKGAAPPAA) has biased composition (low complexity). Phosphoserine is present on residues Ser526 and Ser527. 2 stretches are compositionally biased toward basic and acidic residues: residues 536-554 (EELKREERGLLAEQRDTGL) and 584-595 (EGEHVEREKEVV). Residues 539 to 541 (KRE) form repeat 11. 2 positions are modified to phosphoserine: Ser604 and Ser611. Basic and acidic residues-rich tracts occupy residues 614–631 (EVEKEKETWEERKQREAE) and 638–675 (AAREESEAEVKEDVIEKAELEEMEETHPSDEEGEETKA). Residue Ser643 is modified to Phosphoserine. Phosphothreonine is present on Thr663. Ser666, Ser677, Ser690, and Ser785 each carry phosphoserine. Polar residues-rich tracts occupy residues 845 to 858 (EDQSVASLTAPQTE) and 869 to 881 (TVTSIPSSRTEAT). A phosphoserine mark is found at Ser872, Ser875, Ser876, and Ser889. At Thr892 the chain carries Phosphothreonine. 22 positions are modified to phosphoserine: Ser894, Ser898, Ser907, Ser980, Ser990, Ser998, Ser1007, Ser1013, Ser1022, Ser1029, Ser1037, Ser1061, Ser1132, Ser1134, Ser1148, Ser1160, Ser1178, Ser1188, Ser1191, Ser1197, Ser1206, and Ser1209. Residues 1008 to 1028 (PVEDKSEPRDFQEDSWGETKH) are compositionally biased toward basic and acidic residues. The span at 1142–1157 (SVLSVVSPDTTKQEAT) shows a compositional bias: polar residues. A compositionally biased stretch (polar residues) spans 1180–1190 (EDTQSLSFSEE). Residues 1198–1212 (LDISSKQLSPESLGT) are compositionally biased toward polar residues. Residues 1220-1236 (LGKEERGPVMKAEDDSC) are compositionally biased toward basic and acidic residues. 5 positions are modified to phosphoserine: Ser1252, Ser1280, Ser1301, Ser1304, and Ser1307. The span at 1293-1308 (TSDSSLTKSPESLSSP) shows a compositional bias: low complexity. Basic and acidic residues-rich tracts occupy residues 1317 to 1336 (WEGKAPGKEKEPELKSETRQ), 1357 to 1409 (QKDG…EDQG), 1416 to 1428 (AEKDKASEQRDTD), 1436 to 1479 (EPRD…EHSI), and 1487 to 1574 (RAPD…KADS). Phosphoserine occurs at positions 1504, 1568, 1574, and 1594. The span at 1599 to 1613 (SKAREQEKKYWKEQD) shows a compositional bias: basic and acidic residues. Phosphoserine occurs at positions 1622, 1643, 1715, 1742, 1757, 1763, and 1767. Positions 1707-1718 (TPLQHTPRSPWT) are enriched in polar residues. A Phosphothreonine modification is found at Thr1772. Ser1778 and Ser1784 each carry phosphoserine. Residues 1789 to 1803 (TESTAPMRNEPTTPS) are compositionally biased toward polar residues. Residues 1818 to 1839 (LPPAPLSPAPAPPTPAPEPHTP) are compositionally biased toward pro residues. Residues 1873 to 1885 (KDYRKAEGEREGE) show a composition bias toward basic and acidic residues. The residue at position 1897 (Ser1897) is a Phosphoserine. Over residues 1908 to 1930 (ATRDTEQTEPEQREPTPYPDERS) the composition is skewed to basic and acidic residues. Thr1923 is subject to Phosphothreonine. Polar residues predominate over residues 1984-1997 (SSPASPQNLQSDTP). Phosphoserine is present on Ser1988. The span at 2008-2034 (AVPPRQEPDPGPNVEPSITPPAVPPRA) shows a compositional bias: pro residues. Thr2026 carries the post-translational modification Phosphothreonine. Phosphoserine is present on residues Ser2043 and Ser2077. The segment covering 2055-2092 (PDRRTPSPKETGRGHWDDGTNDSDLEKGAREQPEKETR) has biased composition (basic and acidic residues). Low complexity predominate over residues 2115–2125 (SSLSSDSHLGS). Residues 2144 to 2153 (PAPPQLPSPA) are compositionally biased toward pro residues. A phosphoserine mark is found at Ser2204, Ser2221, Ser2225, Ser2228, Ser2229, and Ser2260. A compositionally biased stretch (polar residues) spans 2226–2237 (EGSSSEATTPVI). Over residues 2271 to 2287 (DLTPLSPAPSASLDLAP) the composition is skewed to low complexity. Residues 2288-2298 (APAPAPAPAPG) show a composition bias toward pro residues. Positions 2299–2309 (LPGDLGDGTLP) are enriched in low complexity. Positions 2352-2364 (AEKEEAEAPHAWE) are enriched in basic and acidic residues. Residue Ser2424 is modified to Phosphoserine. Positions 2477–2489 (SASDSGSSQSDSD) are enriched in low complexity. Residues 2534–2550 (DPPPTPLPDPRPSPPRP) show a composition bias toward pro residues. A compositionally biased stretch (basic and acidic residues) spans 2565–2575 (GRVERLREKGR). Residues 2613 to 2623 (RTVPRPRSTPS) are compositionally biased toward low complexity. A phosphoserine mark is found at Ser2620 and Ser2635.

This sequence belongs to the MAP1 family. As to quaternary structure, 3 different light chains, LC1 (a cleavage product of MAP1B), LC2 (a cleavage product of MAP1A) and LC3 (produced by one of the MAP1LC3 genes), can associate with the MAP1A or MAP1B heavy chains. Interacts with guanylate kinase-like domain of DLG1, DLG2 and DLG4. Binds to CSNK1D. Interacts with TIAM2. In terms of assembly, interacts with ELAVL4. In terms of processing, phosphorylated by CSNK1D. LC2 is generated from MAP1A by proteolytic processing. It is free to associate with both MAP1A and MAP1B. Brain, heart and muscle.

It localises to the cytoplasm. Its subcellular location is the cytoskeleton. In terms of biological role, structural protein involved in the filamentous cross-bridging between microtubules and other skeletal elements. The protein is Microtubule-associated protein 1A (Map1a) of Rattus norvegicus (Rat).